Here is a 121-residue protein sequence, read N- to C-terminus: UPF0344 protein BT9727_1053 (121 aa).

The next 4 helical transmembrane spans lie at 6–26, 38–58, 65–85, and 92–112; these read ITAW…YSAG, LMYI…MKTA, WYGL…MVLV, and ATGA…YLGL.

The protein belongs to the UPF0344 family.

Its subcellular location is the cell membrane. The polypeptide is UPF0344 protein BT9727_1053 (Bacillus thuringiensis subsp. konkukian (strain 97-27)).